We begin with the raw amino-acid sequence, 271 residues long: 3-methyl-2-oxobutanoate hydroxymethyltransferase (271 aa).

Mg(2+) is bound by residues Asp-51 and Asp-90. 3-methyl-2-oxobutanoate contacts are provided by residues 51-52, Asp-90, and Lys-118; that span reads DS. Glu-120 contacts Mg(2+). The Proton acceptor role is filled by Glu-186.

The protein belongs to the PanB family. As to quaternary structure, homodecamer; pentamer of dimers. It depends on Mg(2+) as a cofactor.

It localises to the cytoplasm. The enzyme catalyses 3-methyl-2-oxobutanoate + (6R)-5,10-methylene-5,6,7,8-tetrahydrofolate + H2O = 2-dehydropantoate + (6S)-5,6,7,8-tetrahydrofolate. It functions in the pathway cofactor biosynthesis; (R)-pantothenate biosynthesis; (R)-pantoate from 3-methyl-2-oxobutanoate: step 1/2. Functionally, catalyzes the reversible reaction in which hydroxymethyl group from 5,10-methylenetetrahydrofolate is transferred onto alpha-ketoisovalerate to form ketopantoate. The polypeptide is 3-methyl-2-oxobutanoate hydroxymethyltransferase (Stenotrophomonas maltophilia (strain R551-3)).